We begin with the raw amino-acid sequence, 62 residues long: MTIIFQLTLFALIAVSFLLVIGVPVVFASPSGWTENKGTVFSGVGIWFLLVFAVGILNSFVI.

The next 2 membrane-spanning stretches (helical) occupy residues 8 to 28 (TLFALIAVSFLLVIGVPVVFA) and 41 to 61 (FSGVGIWFLLVFAVGILNSFV).

The protein belongs to the PsbZ family. As to quaternary structure, PSII is composed of 1 copy each of membrane proteins PsbA, PsbB, PsbC, PsbD, PsbE, PsbF, PsbH, PsbI, PsbJ, PsbK, PsbL, PsbM, PsbT, PsbY, PsbZ, Psb30/Ycf12, at least 3 peripheral proteins of the oxygen-evolving complex and a large number of cofactors. It forms dimeric complexes.

The protein resides in the plastid. It localises to the chloroplast thylakoid membrane. In terms of biological role, may control the interaction of photosystem II (PSII) cores with the light-harvesting antenna, regulates electron flow through the 2 photosystem reaction centers. PSII is a light-driven water plastoquinone oxidoreductase, using light energy to abstract electrons from H(2)O, generating a proton gradient subsequently used for ATP formation. This Oltmannsiellopsis viridis (Marine flagellate) protein is Photosystem II reaction center protein Z.